Here is a 928-residue protein sequence, read N- to C-terminus: Sodium/calcium exchanger 3 (928 aa).

The N-terminal stretch at 1–30 is a signal peptide; sequence MAWLRLQPLTSAFLHFGLVTFVLFLNCLRA. At 31-73 the chain is on the extracellular side; it reads EAGDSGDVPSAGQNNESCSGSSDCKEGVILPIWYPENPSLGDK. Asn-45 carries N-linked (GlcNAc...) asparagine glycosylation. The helical transmembrane segment at 74–94 threads the bilayer; that stretch reads IARVIVYFVALIYMFLGVSII. Over 95–147 the chain is Cytoplasmic; sequence ADRFMASIEVITSQEREVTIKKPNGETSTTTIRVWNETVSNLTLMALGSSAPE. A helical transmembrane segment spans residues 148–168; the sequence is ILLSLIEVCGHGFIAGDLGPS. Residue Thr-169 is a topological domain, extracellular. The chain crosses the membrane as a helical span at residues 170 to 190; that stretch reads IVGSAAFNMFIIIGICVYVIP. Residues 191-201 lie on the Cytoplasmic side of the membrane; it reads DGETRKIKHLR. Residues 202-222 form a helical membrane-spanning segment; sequence VFFVTAAWSIFAYIWLYMILA. Topologically, residues 223–230 are extracellular; it reads VFSPGVVQ. Residues 231–251 form a helical membrane-spanning segment; it reads VWEGLLTLFFFPVCVLLAWVA. At 252 to 727 the chain is on the cytoplasmic side; that stretch reads DKRLLFYKYM…DESGEERLPS (476 aa). Residues 253–272 form a putative calmodulin-binding region region; it reads KRLLFYKYMHKKYRTDKHRG. Calx-beta domains are found at residues 390–485 and 519–618; these read EPED…VRLS and ATVT…VIEM. Residues Glu-409, Asp-445, Asp-470, Asp-471, Ile-473, Glu-475, Glu-478, Asp-525, Asp-526, Asp-527, Glu-543, Asp-579, Asp-605, and Glu-673 each coordinate Ca(2+). The helical transmembrane segment at 728–748 threads the bilayer; sequence CFDYVMHFLTVFWKVLFACVP. The Extracellular segment spans residues 749–755; sequence PTEYCHG. A helical transmembrane segment spans residues 756-776; the sequence is WACFVVSILIIGMLTAIIGDL. Residues 777–779 are Cytoplasmic-facing; it reads ASH. Residues 780 to 800 traverse the membrane as a helical segment; that stretch reads FGCTIGLKDSVTAVVFVAFGT. The Extracellular segment spans residues 801-829; it reads SVPDTFASKAAALQDVYADASIGNVTGSN. A glycan (N-linked (GlcNAc...) asparagine) is linked at Asn-824. The chain crosses the membrane as a helical span at residues 830 to 850; it reads AVNVFLGIGLAWSVAAIYWAM. The Cytoplasmic segment spans residues 851-861; sequence QGQEFHVSAGT. A helical transmembrane segment spans residues 862–882; it reads LAFSVTLFTIFAFVCLSVLLY. Over 883–904 the chain is Extracellular; the sequence is RRRPHLGGELGGPRGCKLATTW. The helical transmembrane segment at 905–925 threads the bilayer; the sequence is LFVSLWLLYILFATLEAYCYI. Over 926–928 the chain is Cytoplasmic; that stretch reads KGF.

The protein belongs to the Ca(2+):cation antiporter (CaCA) (TC 2.A.19) family. SLC8 subfamily. In terms of assembly, interacts with AKAP1. As to expression, detected in gray and white matter in the spinal cord. Detected in hippocampus neurons. Detected in brain cortex neurons. Detected in skeletal muscle (at protein level). Isoform 1 and isoform 2 are highly expressed in brain; levels are higher for isoform 2. Isoform 1 and isoform 2 are detected in soleus muscle; levels are higher for isoform 1. Detected in gastrocnemius muscle.

It localises to the cell membrane. It is found in the perikaryon. Its subcellular location is the cell projection. The protein localises to the dendrite. The protein resides in the dendritic spine. It localises to the sarcolemma. It is found in the cytoplasm. Its subcellular location is the sarcoplasm. The protein localises to the cell junction. The protein resides in the mitochondrion outer membrane. It localises to the perinuclear region. It is found in the endoplasmic reticulum membrane. It catalyses the reaction Ca(2+)(in) + 3 Na(+)(out) = Ca(2+)(out) + 3 Na(+)(in). With respect to regulation, calcium transport is stimulated by cytoplasmic Ca(2+) and is inhibited by Na(+). Isoform 1 is more sensitive to stimulation by Ca(2+) than isoform 2. Isoform 2 is more sensitive to inactivation by Na(+). Functionally, mediates the electrogenic exchange of Ca(2+) against Na(+) ions across the cell membrane, and thereby contributes to the regulation of cytoplasmic Ca(2+) levels and Ca(2+)-dependent cellular processes. Contributes to cellular Ca(2+) homeostasis in excitable cells, both in muscle and in brain. In a first phase, voltage-gated channels mediate the rapid increase of cytoplasmic Ca(2+) levels due to release of Ca(2+) stores from the endoplasmic reticulum. SLC8A3 mediates the export of Ca(2+) from the cell during the next phase, so that cytoplasmic Ca(2+) levels rapidly return to baseline. Contributes to Ca(2+) transport during excitation-contraction coupling in muscle. In neurons, contributes to the rapid decrease of cytoplasmic Ca(2+) levels back to baseline after neuronal activation, and thereby contributes to modulate synaptic plasticity, learning and memory. Required for normal oligodendrocyte differentiation and for normal myelination. Mediates Ca(2+) efflux from mitochondria and contributes to mitochondrial Ca(2+) ion homeostasis. Isoform 1 displays higher calcium exchanger activity than isoform 2, probably because isoform 1 has a lower threshold for activation by cytoplasmic Ca(2+). The chain is Sodium/calcium exchanger 3 from Mus musculus (Mouse).